The following is a 356-amino-acid chain: S-adenosylmethionine:tRNA ribosyltransferase-isomerase (356 aa).

This sequence belongs to the QueA family. As to quaternary structure, monomer.

The protein resides in the cytoplasm. It carries out the reaction 7-aminomethyl-7-carbaguanosine(34) in tRNA + S-adenosyl-L-methionine = epoxyqueuosine(34) in tRNA + adenine + L-methionine + 2 H(+). It functions in the pathway tRNA modification; tRNA-queuosine biosynthesis. In terms of biological role, transfers and isomerizes the ribose moiety from AdoMet to the 7-aminomethyl group of 7-deazaguanine (preQ1-tRNA) to give epoxyqueuosine (oQ-tRNA). In Escherichia coli (strain UTI89 / UPEC), this protein is S-adenosylmethionine:tRNA ribosyltransferase-isomerase.